We begin with the raw amino-acid sequence, 67 residues long: Retron Se72 cold shock-like protein (67 aa).

Residues 1–66 (MENGFVNFYD…KGFKAVAIQK (66 aa)) form the CSD domain.

Probable cold shock-like component of antiviral defense system retron Se72, composed of a non-coding RNA (ncRNA), a reverse transcriptase (RT) and this protein. Expression of retron Se72 confers protection against bacteriophage lambda. At multiplicity of infection (MOI) of 0.02 cultures slow growth when infected with lambda but do not collapse, at MOI 2 cultures enter growth stasis. The chain is Retron Se72 cold shock-like protein from Salmonella heidelberg (strain 579083-10).